A 95-amino-acid polypeptide reads, in one-letter code: Acylphosphatase (95 aa).

Positions 5-93 (RAHVFIRGKV…GEFKDFKILP (89 aa)) constitute an Acylphosphatase-like domain. Residues R20 and N38 contribute to the active site.

Belongs to the acylphosphatase family.

The catalysed reaction is an acyl phosphate + H2O = a carboxylate + phosphate + H(+). The sequence is that of Acylphosphatase (acyP) from Pyrobaculum aerophilum (strain ATCC 51768 / DSM 7523 / JCM 9630 / CIP 104966 / NBRC 100827 / IM2).